The primary structure comprises 163 residues: Phosphopantetheine adenylyltransferase (163 aa).

Threonine 9 serves as a coordination point for substrate. ATP is bound by residues 9 to 10 and histidine 17; that span reads TF. Residues lysine 41, leucine 76, and arginine 90 each coordinate substrate. ATP contacts are provided by residues 91–93, glutamate 101, and 126–132; these read GLR and HQAIASR.

Belongs to the bacterial CoaD family. In terms of assembly, homohexamer. It depends on Mg(2+) as a cofactor.

It is found in the cytoplasm. The catalysed reaction is (R)-4'-phosphopantetheine + ATP + H(+) = 3'-dephospho-CoA + diphosphate. It participates in cofactor biosynthesis; coenzyme A biosynthesis; CoA from (R)-pantothenate: step 4/5. In terms of biological role, reversibly transfers an adenylyl group from ATP to 4'-phosphopantetheine, yielding dephospho-CoA (dPCoA) and pyrophosphate. The protein is Phosphopantetheine adenylyltransferase of Caulobacter vibrioides (strain ATCC 19089 / CIP 103742 / CB 15) (Caulobacter crescentus).